The sequence spans 283 residues: Foldase protein PrsA 3 (283 aa).

The first 21 residues, M1–A21, serve as a signal peptide directing secretion. C22 carries N-palmitoyl cysteine lipidation. C22 carries S-diacylglycerol cysteine lipidation. Positions K132–D222 constitute a PpiC domain.

It belongs to the PrsA family.

It localises to the cell membrane. It catalyses the reaction [protein]-peptidylproline (omega=180) = [protein]-peptidylproline (omega=0). Plays a major role in protein secretion by helping the post-translocational extracellular folding of several secreted proteins. Important for the secretion of the protective antigen. The three PsrA proteins in this organism show different but overlapping substrate specificities. The chain is Foldase protein PrsA 3 (prsA3) from Bacillus anthracis.